The chain runs to 215 residues: Uracil-DNA glycosylase (215 aa).

Residue Asp59 is the Proton acceptor of the active site.

Belongs to the uracil-DNA glycosylase (UDG) superfamily. UNG family.

It is found in the cytoplasm. It carries out the reaction Hydrolyzes single-stranded DNA or mismatched double-stranded DNA and polynucleotides, releasing free uracil.. Its function is as follows. Excises uracil residues from the DNA which can arise as a result of misincorporation of dUMP residues by DNA polymerase or due to deamination of cytosine. This chain is Uracil-DNA glycosylase, found in Aliarcobacter butzleri (strain RM4018) (Arcobacter butzleri).